The following is a 308-amino-acid chain: Protein translocase subunit SecF (308 aa).

Transmembrane regions (helical) follow at residues Ser-28–Ile-48, Ile-140–Val-160, Trp-164–Phe-184, Leu-194–Ile-214, Ile-246–Ala-266, and Ile-272–Ile-292.

It belongs to the SecD/SecF family. SecF subfamily. Forms a complex with SecD. Part of the essential Sec protein translocation apparatus which comprises SecA, SecYEG and auxiliary proteins SecDF-YajC and YidC.

Its subcellular location is the cell inner membrane. Part of the Sec protein translocase complex. Interacts with the SecYEG preprotein conducting channel. SecDF uses the proton motive force (PMF) to complete protein translocation after the ATP-dependent function of SecA. This chain is Protein translocase subunit SecF, found in Rickettsia rickettsii (strain Sheila Smith).